We begin with the raw amino-acid sequence, 348 residues long: S-adenosylmethionine:tRNA ribosyltransferase-isomerase (348 aa).

Belongs to the QueA family. As to quaternary structure, monomer.

The protein localises to the cytoplasm. It carries out the reaction 7-aminomethyl-7-carbaguanosine(34) in tRNA + S-adenosyl-L-methionine = epoxyqueuosine(34) in tRNA + adenine + L-methionine + 2 H(+). Its pathway is tRNA modification; tRNA-queuosine biosynthesis. Functionally, transfers and isomerizes the ribose moiety from AdoMet to the 7-aminomethyl group of 7-deazaguanine (preQ1-tRNA) to give epoxyqueuosine (oQ-tRNA). The sequence is that of S-adenosylmethionine:tRNA ribosyltransferase-isomerase from Polynucleobacter asymbioticus (strain DSM 18221 / CIP 109841 / QLW-P1DMWA-1) (Polynucleobacter necessarius subsp. asymbioticus).